A 171-amino-acid polypeptide reads, in one-letter code: CDP-archaeol synthase (171 aa).

5 consecutive transmembrane segments (helical) span residues 7–27 (IFWAFWYILPAYFANASPVLV), 54–74 (GFIGGVLIGTLVGIVQYFITP), 84–104 (VKLAFLLSFGALIGDLVGSFI), 115–135 (PAIGLDQLGFLISALAFAYPV), and 141–161 (GQIIFLLVVSPFIHWGANYFA).

The protein belongs to the CDP-archaeol synthase family. The cofactor is Mg(2+).

The protein resides in the cell membrane. The catalysed reaction is 2,3-bis-O-(geranylgeranyl)-sn-glycerol 1-phosphate + CTP + H(+) = CDP-2,3-bis-O-(geranylgeranyl)-sn-glycerol + diphosphate. It functions in the pathway membrane lipid metabolism; glycerophospholipid metabolism. Catalyzes the formation of CDP-2,3-bis-(O-geranylgeranyl)-sn-glycerol (CDP-archaeol) from 2,3-bis-(O-geranylgeranyl)-sn-glycerol 1-phosphate (DGGGP) and CTP. This reaction is the third ether-bond-formation step in the biosynthesis of archaeal membrane lipids. This Thermococcus kodakarensis (strain ATCC BAA-918 / JCM 12380 / KOD1) (Pyrococcus kodakaraensis (strain KOD1)) protein is CDP-archaeol synthase.